The primary structure comprises 175 residues: Co-chaperone protein daf-41 (175 aa).

Positions 2–89 (AKQPTVLWAQ…KTPAWWPRLL (88 aa)) constitute a CS domain. Residues 109-175 (DEDDEAEDAG…EEEGKNGTRA (67 aa)) form a disordered region. Over residues 148–168 (GLEDDEEDDDMPDLEDNEEEE) the composition is skewed to acidic residues.

Belongs to the p23/wos2 family. Expressed in anterior and posterior neurons including ASE, AWC, ASI and ADL amphids and phasmid sensory neurons, peripheral neurons and ventral cord motorneurons. Additionally expressed in body wall muscle, pharynx, vulva, germ cells and intestine.

Its function is as follows. Co-chaperone for hsp90/daf-21. Involved in regulation of longevity, larval entry and exit from the dauer stage of development and response to environmental cues, such as oxidative stress, in a temperature-dependent manner. Role in daf-16 and hsf-1 inhibition at elevated temperatures. The protein is Co-chaperone protein daf-41 of Caenorhabditis elegans.